A 327-amino-acid polypeptide reads, in one-letter code: Chromatin modification-related protein eaf3 (327 aa).

The Tudor-knot domain maps to 13-66; sequence ERVLCFHHEILYEAKILDLRHTDPDDRKSPYEYLVHYKGWKNTWDDWVPQDRLR. The interval 85-132 is disordered; sequence AALRQKSTKTSLKKKGGSDHSSARGSEERQTSVPGRGTKRARDNDIEK. Over residues 100–114 the composition is skewed to basic and acidic residues; that stretch reads GGSDHSSARGSEERQ. The MRG domain occupies 138-312; that stretch reads TRPSVRIVMP…ASNEYIEKSR (175 aa).

Belongs to the MRG family. As to quaternary structure, component of the NuA4 histone acetyltransferase complex.

Its subcellular location is the nucleus. Involved in deacetylation of histones, chromatin assembly and chromosome segregation. May act as a transcriptional oscillator, directing histone deacetylases to specific chromosomal domains. Component of the NuA4 histone acetyltransferase complex which is involved in transcriptional activation of selected genes principally by acetylation of nucleosomal histone H4 and H2A. The NuA4 complex is also involved in DNA repair. This is Chromatin modification-related protein eaf3 (eaf3) from Emericella nidulans (strain FGSC A4 / ATCC 38163 / CBS 112.46 / NRRL 194 / M139) (Aspergillus nidulans).